Consider the following 253-residue polypeptide: RBPJ-interacting and tubulin-associated protein 1 (253 aa).

3 disordered regions span residues 30 to 89 (SPAR…KNKY), 127 to 175 (TPPA…LCVP), and 188 to 253 (HLTV…PPWK). The span at 71-81 (SPSSRGSTPNL) shows a compositional bias: polar residues. Positions 81–97 (LTPRKKNKYRLIGHAPS) match the Nuclear localization signal motif. Residues 112 to 140 (RMAVGDAAKLRTLFWTPPATPRGSHTPCP) form an interaction with RBPJ/RBPSUH region. The segment at 140–253 (PRETPLRAIH…CPPKPKPPWK (114 aa)) is interaction with tubulin. Residues 188 to 228 (HLTVPSTGHPASSAPQTNGPWSPRPNTSGATVQSPLVTSKA) are compositionally biased toward polar residues.

It belongs to the RITA family. Interacts with RBPJ/RBPSUH.

It is found in the cytoplasm. Its subcellular location is the nucleus. The protein resides in the cytoskeleton. The protein localises to the microtubule organizing center. It localises to the centrosome. Functionally, tubulin-binding protein that acts as a negative regulator of Notch signaling pathway. Shuttles between the cytoplasm and the nucleus and mediates the nuclear export of RBPJ/RBPSUH, thereby preventing the interaction between RBPJ/RBPSUH and NICD product of Notch proteins (Notch intracellular domain), leading to down-regulate Notch-mediated transcription. May play a role in neurogenesis. The chain is RBPJ-interacting and tubulin-associated protein 1 (Rita1) from Mus musculus (Mouse).